The chain runs to 217 residues: Large ribosomal subunit protein uL3 (217 aa).

The interval 129-161 is disordered; sequence SRGPMSHGSKNHRAPGSTGAGTTPGRIYPGKRM. Low complexity predominate over residues 142–153; that stretch reads APGSTGAGTTPG.

Belongs to the universal ribosomal protein uL3 family. In terms of assembly, part of the 50S ribosomal subunit. Forms a cluster with proteins L14 and L19.

In terms of biological role, one of the primary rRNA binding proteins, it binds directly near the 3'-end of the 23S rRNA, where it nucleates assembly of the 50S subunit. The chain is Large ribosomal subunit protein uL3 from Prochlorococcus marinus (strain MIT 9515).